The sequence spans 338 residues: Fructose-1,6-bisphosphatase class 1 (338 aa).

The Mg(2+) site is built by Glu92, Asp114, Leu116, and Asp117. Substrate contacts are provided by residues 117–120 (DGSS), Asn210, Tyr243, and Lys276. Glu282 contributes to the Mg(2+) binding site.

Belongs to the FBPase class 1 family. As to quaternary structure, homotetramer. It depends on Mg(2+) as a cofactor.

The protein localises to the cytoplasm. The enzyme catalyses beta-D-fructose 1,6-bisphosphate + H2O = beta-D-fructose 6-phosphate + phosphate. The protein operates within carbohydrate biosynthesis; gluconeogenesis. This is Fructose-1,6-bisphosphatase class 1 from Maridesulfovibrio salexigens (strain ATCC 14822 / DSM 2638 / NCIMB 8403 / VKM B-1763) (Desulfovibrio salexigens).